A 178-amino-acid chain; its full sequence is Histone H3-like centromeric protein CENH3 (178 aa).

The disordered stretch occupies residues 1 to 81; the sequence is MARTKHRVTR…GSQKKSYRYR (81 aa). Lys-5 is subject to N6,N6,N6-trimethyllysine; alternate. An N6,N6-dimethyllysine; alternate modification is found at Lys-5. An N6-methyllysine; alternate modification is found at Lys-5. Ser-11 carries the post-translational modification Phosphoserine. Low complexity predominate over residues 16–36; it reads QTDAAGASSSQAAGPTTTPTR. Residues 43–56 are compositionally biased toward polar residues; it reads DNTQQTNPTTSPAT. N6-methyllysine; alternate occurs at positions 63 and 75. Lys-63 is modified (N6-acetyllysine; alternate). At Lys-75 the chain carries N6,N6,N6-trimethyllysine; alternate. Position 75 is an N6,N6-dimethyllysine; alternate (Lys-75).

It belongs to the histone H3 family. As to quaternary structure, forms a nucleosome-like histone octamer containing two molecules each of H2A, H2B, CENH3 and H4 assembled in one CENH3-H4 heterotetramer and two H2A-H2B heterodimers. Interacts with ORTH2.

Its subcellular location is the chromosome. The protein localises to the centromere. It localises to the kinetochore. In terms of biological role, histone H3-like variant which exclusively replaces conventional H3 in the nucleosome core of centromeric chromatin at the inner plate of the kinetochore. Required for recruitment and assembly of kinetochore proteins, mitotic progression and chromosome segregation. May serve as an epigenetic mark that propagates centromere identity through replication and cell division. This Arabidopsis thaliana (Mouse-ear cress) protein is Histone H3-like centromeric protein CENH3.